The primary structure comprises 583 residues: Moesin/ezrin/radixin homolog 1 (583 aa).

Residues 11-301 (MNVRVTTMDA…GNHELYMRRR (291 aa)) form the FERM domain. Disordered regions lie at residues 466-518 (TTTP…RTLA) and 539-558 (RDDTMETANDKIHRENVRQG). Over residues 476-485 (EEEEDNEEEL) the composition is skewed to acidic residues. Positions 496–518 (DYSKDFDTDEHIKDPVEERRTLA) are enriched in basic and acidic residues. Phosphothreonine is present on Thr-564.

Interacts with cytoskeletal actin.

The protein localises to the cell junction. The protein resides in the adherens junction. It is found in the cell projection. Its subcellular location is the microvillus. It localises to the rhabdomere. The protein localises to the cell membrane. The protein resides in the cytoplasm. It is found in the cytoskeleton. Its function is as follows. Involved in connections of major cytoskeletal structures to the plasma membrane. This chain is Moesin/ezrin/radixin homolog 1, found in Aedes aegypti (Yellowfever mosquito).